A 261-amino-acid chain; its full sequence is MSANKKTLVLKVGGALMQCEMGLARLMASAANIIKSGQSVILVHGGGCLVDEQLKANGMETVKLDGLRVTPEEQVPIVVGALAGTSNKILQASAIKAGITSVGMSLCDGAIVNGSIKDEQLGFVGEVSPNDPTYLNFLLAQGWMPIVSSIAVDDAGNLLNVNADQAATVIAKLVEGQLVLLSDVSGVLDGKGQLIKTLDKAHADELTKLGVIEKGMKVKVEAALEVAQWMGQPVQVASWRDAEQLSALEKGESIGTQVMPH.

Residues 46-47 (GG), R68, and N160 each bind substrate.

It belongs to the acetylglutamate kinase family. ArgB subfamily.

It is found in the cytoplasm. The catalysed reaction is N-acetyl-L-glutamate + ATP = N-acetyl-L-glutamyl 5-phosphate + ADP. Its pathway is amino-acid biosynthesis; L-arginine biosynthesis; N(2)-acetyl-L-ornithine from L-glutamate: step 2/4. Its function is as follows. Catalyzes the ATP-dependent phosphorylation of N-acetyl-L-glutamate. In Shewanella loihica (strain ATCC BAA-1088 / PV-4), this protein is Acetylglutamate kinase.